A 202-amino-acid chain; its full sequence is Glycerol-3-phosphate acyltransferase (202 aa).

Transmembrane regions (helical) follow at residues 3 to 23 (NLII…LILT), 61 to 81 (IATI…LKFL), 87 to 107 (LLWS…YLLF), 117 to 137 (AGAM…VWAV), 144 to 164 (ISSL…FIFN), and 167 to 187 (LEIH…YKHL).

Belongs to the PlsY family. Probably interacts with PlsX.

The protein resides in the cell inner membrane. The enzyme catalyses an acyl phosphate + sn-glycerol 3-phosphate = a 1-acyl-sn-glycero-3-phosphate + phosphate. Its pathway is lipid metabolism; phospholipid metabolism. Functionally, catalyzes the transfer of an acyl group from acyl-phosphate (acyl-PO(4)) to glycerol-3-phosphate (G3P) to form lysophosphatidic acid (LPA). This enzyme utilizes acyl-phosphate as fatty acyl donor, but not acyl-CoA or acyl-ACP. The protein is Glycerol-3-phosphate acyltransferase of Campylobacter jejuni subsp. doylei (strain ATCC BAA-1458 / RM4099 / 269.97).